The following is a 430-amino-acid chain: Histidine--tRNA ligase (430 aa).

Belongs to the class-II aminoacyl-tRNA synthetase family. Homodimer.

The protein resides in the cytoplasm. The catalysed reaction is tRNA(His) + L-histidine + ATP = L-histidyl-tRNA(His) + AMP + diphosphate + H(+). The chain is Histidine--tRNA ligase from Gloeothece citriformis (strain PCC 7424) (Cyanothece sp. (strain PCC 7424)).